Reading from the N-terminus, the 108-residue chain is Mitochondrial import inner membrane translocase subunit tim-13 (108 aa).

The short motif at 45 to 68 (CTNKCITAPGSSLASGEKQCLQRC) is the Twin CX3C motif element. 2 disulfide bridges follow: Cys-45–Cys-68 and Cys-49–Cys-64. The tract at residues 89–108 (EEMASSGGMGGGFGQGPSFS) is disordered. The span at 95–108 (GGMGGGFGQGPSFS) shows a compositional bias: gly residues.

The protein belongs to the small Tim family. As to quaternary structure, heterohexamer; composed of 3 copies of tim-8/ddp-1 and 3 copies of tin-13/tim-13, named soluble 70 kDa complex. Associates with the TIM22 complex, whose core is composed of tim-22.

It is found in the mitochondrion inner membrane. Mitochondrial intermembrane chaperone that participates in the import and insertion of some multi-pass transmembrane proteins into the mitochondrial inner membrane. Also required for the transfer of beta-barrel precursors from the TOM complex to the sorting and assembly machinery (SAM complex) of the outer membrane. Acts as a chaperone-like protein that protects the hydrophobic precursors from aggregation and guide them through the mitochondrial intermembrane space. The tim-8-tim-13 complex mediates the import of some proteins while the predominant tim-9/tin-9.1-tim-10/tin-10 70 kDa complex mediates the import of much more proteins. In Caenorhabditis elegans, this protein is Mitochondrial import inner membrane translocase subunit tim-13 (tin-13).